Reading from the N-terminus, the 201-residue chain is Small ribosomal subunit protein uS4c (201 aa).

In terms of domain architecture, S4 RNA-binding spans Met89–Asn150.

This sequence belongs to the universal ribosomal protein uS4 family. In terms of assembly, part of the 30S ribosomal subunit. Contacts protein S5. The interaction surface between S4 and S5 is involved in control of translational fidelity.

The protein resides in the plastid. It is found in the chloroplast. Its function is as follows. One of the primary rRNA binding proteins, it binds directly to 16S rRNA where it nucleates assembly of the body of the 30S subunit. With S5 and S12 plays an important role in translational accuracy. The sequence is that of Small ribosomal subunit protein uS4c (rps4) from Acorus calamus (Sweet flag).